The chain runs to 72 residues: Probable movement protein p8 (72 aa).

Residues 16–58 (GRARSVEGKKHNGSGLTGVKRHAVSETSQKSQQGTGNGTMTNI) are disordered. The segment covering 40–58 (SETSQKSQQGTGNGTMTNI) has biased composition (polar residues).

Belongs to the carmovirus/necrovirus/panicovirus movement protein p8 family.

Cell-to-cell movement. The chain is Probable movement protein p8 from Tobacco necrosis virus (strain A) (TNV-A).